Here is a 417-residue protein sequence, read N- to C-terminus: Pygopus homolog 1 (417 aa).

Residues 1–11 show a composition bias toward basic and acidic residues; that stretch reads MSAEQDKEPIA. 3 disordered regions span residues 1–71, 175–265, and 284–318; these read MSAE…AANP, HFRQ…MEDP, and ENSR…CTPD. The segment covering 18 to 27 has biased composition (gly residues); that stretch reads GDSGLDGLGG. The Nuclear localization signal signature appears at 35-41; the sequence is PDKKKRK. Composition is skewed to polar residues over residues 180 to 221, 240 to 256, and 284 to 305; these read SAEN…TNHS, DFTQ…SSTH, and ENSR…QNKP. Residues 338–396 form a PHD-type zinc finger; it reads VYPCGICTNEVNDDQDAILCEASCQKWFHRICTGMTETAYGLLTAEASAVWGCDTCMAD. The tract at residues 339-386 is interaction with H3K4me2; the sequence is YPCGICTNEVNDDQDAILCEASCQKWFHRICTGMTETAYGLLTAEASA. Residues 371-389 form an interaction with BCL9 region; the sequence is GMTETAYGLLTAEASAVWG.

In terms of assembly, interacts with BCL9 via The PHD-type zinc finger motiv, and thereby becomes part of the nuclear beta-catenin/TCF complex. Found in a complex with BCL9L, CDC73, CTNNB1 and PYGO1. Interacts with histone H3 mono-, di- or tri-methylated at 'Lys4' (H3K4me1, H3K4me2, H3K4me3); the interaction is enhanced by the interaction with BCL9.

It localises to the nucleus. Its function is as follows. Involved in signal transduction through the Wnt pathway. This is Pygopus homolog 1 (Pygo1) from Mus musculus (Mouse).